Here is a 458-residue protein sequence, read N- to C-terminus: MSTGKIIQVIGAVIDVEFSRDNTPKVYDALNVKEANLVLEVQQQIGDGVVRTIAMGSSDGLRRGMVVENTNAPISVPVGHGTLGRIMNVLGEPIDEAGPIQYTETRSIHQAPPAYDELALSTEILETGIKVVDLICPFAKGGKVGLFGGAGVGKTVTMMELINNIAKEHSGYSVFAGVGERTREGNDFYYEMKDSNVLDKVALVYGQMNEPPGNRLRVALSGLTIAEGFRDEKRDVLMFIDNIYRYTLAGTEVSALLGRMPSAVGYQPTLAAEMGALQERITSTKTGSITSVQAVYVPADDLTDPSPATTFSHLDATIVLSRQIAELGIYPAVDPLDSTSRQLDPLVVGHDHYETARAVQKVLQRYKELKDIIAILGMDELSDEDKRTVDRARKIQRFLSQPFHVAEVFTGNPGKFVSLKDTVASFKAIVNGEYDHLPEQAFYMVGSIQEAIEKAKTL.

Residue 148 to 155 (GGAGVGKT) participates in ATP binding.

Belongs to the ATPase alpha/beta chains family. As to quaternary structure, F-type ATPases have 2 components, CF(1) - the catalytic core - and CF(0) - the membrane proton channel. CF(1) has five subunits: alpha(3), beta(3), gamma(1), delta(1), epsilon(1). CF(0) has three main subunits: a(1), b(2) and c(9-12). The alpha and beta chains form an alternating ring which encloses part of the gamma chain. CF(1) is attached to CF(0) by a central stalk formed by the gamma and epsilon chains, while a peripheral stalk is formed by the delta and b chains.

It is found in the cell inner membrane. It carries out the reaction ATP + H2O + 4 H(+)(in) = ADP + phosphate + 5 H(+)(out). Produces ATP from ADP in the presence of a proton gradient across the membrane. The catalytic sites are hosted primarily by the beta subunits. This Francisella philomiragia subsp. philomiragia (strain ATCC 25017 / CCUG 19701 / FSC 153 / O#319-036) protein is ATP synthase subunit beta.